We begin with the raw amino-acid sequence, 248 residues long: DNA repair protein RecO (248 aa).

The protein belongs to the RecO family.

In terms of biological role, involved in DNA repair and RecF pathway recombination. This chain is DNA repair protein RecO, found in Bacillus cytotoxicus (strain DSM 22905 / CIP 110041 / 391-98 / NVH 391-98).